A 469-amino-acid polypeptide reads, in one-letter code: Acetyl-CoA decarbonylase/synthase complex subunit beta 2 (469 aa).

[Ni-Fe-S] cluster-binding residues include Cys187, Cys190, Cys276, and Cys278.

Belongs to the CdhC family. Monomer. The ACDS complex is made up of alpha, epsilon, beta, gamma and delta chains with a probable stoichiometry of (alpha(2)epsilon(2))(4)-beta(8)-(gamma(1)delta(1))(8) (Potential). It depends on [Ni-Fe-S] cluster as a cofactor.

It catalyses the reaction Co(I)-[corrinoid Fe-S protein] + acetyl-CoA + H(+) = methyl-Co(III)-[corrinoid Fe-S protein] + CO + CoA. Its function is as follows. Part of a complex that catalyzes the reversible cleavage of acetyl-CoA, allowing autotrophic growth from CO(2). The alpha-epsilon complex generates CO from CO(2), while the beta subunit (this protein) combines the CO with CoA and a methyl group to form acetyl-CoA. The methyl group, which is incorporated into acetyl-CoA, is transferred to the beta subunit by a corrinoid iron-sulfur protein (the gamma-delta complex). The chain is Acetyl-CoA decarbonylase/synthase complex subunit beta 2 (cdhC2) from Methanocaldococcus jannaschii (strain ATCC 43067 / DSM 2661 / JAL-1 / JCM 10045 / NBRC 100440) (Methanococcus jannaschii).